We begin with the raw amino-acid sequence, 1386 residues long: Roundabout homolog 3 (1386 aa).

Residues 1-20 (MLRYLLKTLLQMNLFADSLA) form the signal peptide. Residues 21-891 (GDISNSSELL…VRLARVLREP (871 aa)) lie on the Extracellular side of the membrane. N-linked (GlcNAc...) asparagine glycosylation is found at Asn-25, Asn-34, Asn-41, and Asn-53. Ig-like C2-type domains are found at residues 64–160 (PRIV…ASLE), 166–253 (DDFR…AEVM), 258–342 (PSFL…GSLS), 347–440 (PQLV…ALLE), and 450–531 (PPVI…GEAT). The cysteines at positions 85 and 143 are disulfide-linked. The N-linked (GlcNAc...) asparagine glycan is linked to Asn-156. Intrachain disulfides connect Cys-187–Cys-236, Cys-279–Cys-326, and Cys-368–Cys-424. Asn-410, Asn-459, and Asn-503 each carry an N-linked (GlcNAc...) asparagine glycan. A disulfide bond links Cys-472 and Cys-521. Disordered regions lie at residues 541 to 563 (DWGV…SQPV) and 639 to 662 (EPSP…EDPW). Residues 546 to 559 (PDPPTEPSSPPGAP) are compositionally biased toward pro residues. 3 Fibronectin type-III domains span residues 558–652 (APSQ…TQDS), 671–766 (VAVR…IPEE), and 771–869 (PPQG…SPPD). N-linked (GlcNAc...) asparagine glycans are attached at residues Asn-784, Asn-813, and Asn-820. The chain crosses the membrane as a helical span at residues 892 to 912 (AFLAGSGAACGALLLGLCAAL). Over 913–1386 (YWRRKQRKEL…PGQKRREEPR (474 aa)) the chain is Cytoplasmic. Disordered regions lie at residues 965 to 989 (SWPH…NPDP), 1028 to 1310 (ELQT…AVPL), and 1327 to 1386 (SRPS…EEPR). Residues 1067–1083 (VKLLGKPVQMPSLNWPE) are compositionally biased toward low complexity. Over residues 1099–1112 (GPEEELEGSSEPEE) the composition is skewed to acidic residues. Positions 1158-1169 (PSPPDPPQPPTD) are enriched in pro residues. 2 stretches are compositionally biased toward low complexity: residues 1178-1191 (RRVP…LSVS) and 1202-1229 (PAGL…SAPG). Ser-1263 carries the phosphoserine modification. Over residues 1294-1304 (LERERSGERKA) the composition is skewed to basic and acidic residues. The span at 1333–1344 (SRGQGTSTCSTA) shows a compositional bias: polar residues. Residues 1345–1361 (GSNSSRGSSSSRGSRGP) show a composition bias toward low complexity.

It belongs to the immunoglobulin superfamily. ROBO family. As to quaternary structure, monomer. Interacts (via Fibronectin type-III 1 domain) with NELL2 (via the EGF domains) with a 3:3 stoichiometry; this interaction promotes oligomerization of ROBO3 resulting in the repulsion of commissural axons in the midline.

It is found in the membrane. In terms of biological role, receptor involved in axon guidance during development. Acts as a multifunctional regulator of pathfinding that simultaneously mediates NELL2 repulsion, inhibits SLIT repulsion, and facilitates Netrin-1/NTN1 attraction. In spinal cord development plays a role in guiding commissural axons probably by preventing premature sensitivity to Slit proteins thus inhibiting Slit signaling through ROBO1/ROBO2. Binding OF NELL2 to the receptor ROBO3 promotes oligomerization of ROBO3, resulting in the repulsion of commissural axons in the midline. ROBO3 also indirectly boosts axon attraction to NTN1 without interacting with NTN1 itself. The sequence is that of Roundabout homolog 3 from Homo sapiens (Human).